The sequence spans 526 residues: Alpha-ketoglutaric semialdehyde dehydrogenase (526 aa).

NADP(+) contacts are provided by residues 159–160, 185–188, and 240–241; these read SN, KAHS, and GS. Glutamate 264 (proton acceptor) is an active-site residue. The Nucleophile role is filled by cysteine 301. NADP(+) is bound at residue glutamate 393.

The protein belongs to the aldehyde dehydrogenase family.

The enzyme catalyses 2,5-dioxopentanoate + NADP(+) + H2O = 2-oxoglutarate + NADPH + 2 H(+). Its pathway is carbohydrate acid metabolism; D-glucarate degradation. In terms of biological role, catalyzes the NAD(P)(+)-dependent oxidation of alpha-ketoglutaric semialdehyde (alphaKGSA) to alpha-ketoglutarate in the D-glutarate degradation pathway. This Acinetobacter baylyi (strain ATCC 33305 / BD413 / ADP1) protein is Alpha-ketoglutaric semialdehyde dehydrogenase.